Reading from the N-terminus, the 102-residue chain is NADH-quinone oxidoreductase subunit K (102 aa).

3 helical membrane-spanning segments follow: residues 6-26 (LGQG…GVLV), 30-50 (LLFM…AFIV), and 64-84 (FILV…LILL).

It belongs to the complex I subunit 4L family. As to quaternary structure, NDH-1 is composed of 14 different subunits. Subunits NuoA, H, J, K, L, M, N constitute the membrane sector of the complex.

Its subcellular location is the cell inner membrane. It catalyses the reaction a quinone + NADH + 5 H(+)(in) = a quinol + NAD(+) + 4 H(+)(out). In terms of biological role, NDH-1 shuttles electrons from NADH, via FMN and iron-sulfur (Fe-S) centers, to quinones in the respiratory chain. The immediate electron acceptor for the enzyme in this species is believed to be ubiquinone. Couples the redox reaction to proton translocation (for every two electrons transferred, four hydrogen ions are translocated across the cytoplasmic membrane), and thus conserves the redox energy in a proton gradient. This is NADH-quinone oxidoreductase subunit K from Acidiphilium cryptum (strain JF-5).